Consider the following 289-residue polypeptide: Glycine--tRNA ligase alpha subunit (289 aa).

Belongs to the class-II aminoacyl-tRNA synthetase family. Tetramer of two alpha and two beta subunits.

It localises to the cytoplasm. It carries out the reaction tRNA(Gly) + glycine + ATP = glycyl-tRNA(Gly) + AMP + diphosphate. The chain is Glycine--tRNA ligase alpha subunit from Nitratidesulfovibrio vulgaris (strain ATCC 29579 / DSM 644 / CCUG 34227 / NCIMB 8303 / VKM B-1760 / Hildenborough) (Desulfovibrio vulgaris).